The following is a 535-amino-acid chain: Methylmalonate-semialdehyde/malonate-semialdehyde dehydrogenase [acylating], mitochondrial (535 aa).

A mitochondrion-targeting transit peptide spans 1–32 (MAAAVAAAAAMRSRILQVSSKVNATWYPASSF). Residues Lys47, Lys52, Lys55, and Lys76 each carry the N6-acetyllysine; alternate modification. N6-succinyllysine; alternate occurs at positions 47, 52, 55, and 76. Position 87 is an N6-acetyllysine (Lys87). An N6-acetyllysine; alternate mark is found at Lys117 and Lys129. Residues Lys117 and Lys129 each carry the N6-succinyllysine; alternate modification. NAD(+) contacts are provided by Ala183, Phe185, Lys209, Glu212, Arg213, and Ser262. Ser262 bears the Phosphoserine mark. The residue at position 298 (Lys298) is an N6-acetyllysine. Cys317 acts as the Nucleophile in catalysis. An N6-acetyllysine mark is found at Lys330 and Lys331. 2 positions are modified to N6-acetyllysine; alternate: Lys364 and Lys376. N6-succinyllysine; alternate occurs at positions 364 and 376. A Phosphoserine modification is found at Ser380. Lys391 is modified (N6-succinyllysine). Glu417 contacts NAD(+). N6-acetyllysine is present on Lys500. Position 517 is an N6-succinyllysine (Lys517).

The protein belongs to the aldehyde dehydrogenase family. In terms of assembly, homotetramer. Post-translationally, acetylation of Lys-55; Lys-117 and Lys-331 is observed in liver mitochondria from fasted mice but not from fed mice.

The protein localises to the mitochondrion. It carries out the reaction 3-oxopropanoate + NAD(+) + CoA + H2O = hydrogencarbonate + acetyl-CoA + NADH + H(+). It catalyses the reaction 2-methyl-3-oxopropanoate + NAD(+) + CoA + H2O = propanoyl-CoA + hydrogencarbonate + NADH + H(+). The catalysed reaction is (R)-2-methyl-3-oxopropanoate + NAD(+) + CoA + H2O = propanoyl-CoA + hydrogencarbonate + NADH + H(+). The enzyme catalyses (S)-2-methyl-3-oxopropanoate + NAD(+) + CoA + H2O = propanoyl-CoA + hydrogencarbonate + NADH + H(+). Malonate and methylmalonate semialdehyde dehydrogenase involved in the catabolism of valine, thymine, and compounds catabolized by way of beta-alanine, including uracil and cytidine. This chain is Methylmalonate-semialdehyde/malonate-semialdehyde dehydrogenase [acylating], mitochondrial, found in Mus musculus (Mouse).